The following is a 495-amino-acid chain: MVYENPDGIRIGLEIHVQLNKLKTKMFCGCSTDYHNAAPNTHTCPICLGLPGTLPVLNKKVVEAAIKVGLALEGEIAEETQFHRKNYFYPDLPKGFQVTQYDYPIVSKGKVVIEGEDGEHVVGITRAHMEEDPGKLVHIGSIGKSKGVLIDYNRSGMPLIETVTEPDMRSPKEARRFLDKFRNILEYLDVFDGNLEGAMRVDANVSVHWGTRVEVKNISSHKGVERALLYEIMRQKNVIRRGGTIVQETRHFDEGRGVTLSMRTKEEAEDYRYFREPDLMPMRITDWIPAIKETLPELPDAKRTRFIEQYGITDMHARALTSKIMLADFYEGVCAKGVDPKIAATWTADVFLGELNYRDLAISSYGGKTIGFIHAKDPEVENSFKGSDMVELVTLFAEGKISDRAAVEVIRTILDGTEEKTPSQIIEEKGLFKAEDDLVTKAVAETIAENAAAVQDYLGGTEKSLNFLVGQVMKKTKGTADAKTARELILKELKG.

Belongs to the GatB/GatE family. GatB subfamily. Heterotrimer of A, B and C subunits.

The catalysed reaction is L-glutamyl-tRNA(Gln) + L-glutamine + ATP + H2O = L-glutaminyl-tRNA(Gln) + L-glutamate + ADP + phosphate + H(+). It carries out the reaction L-aspartyl-tRNA(Asn) + L-glutamine + ATP + H2O = L-asparaginyl-tRNA(Asn) + L-glutamate + ADP + phosphate + 2 H(+). Allows the formation of correctly charged Asn-tRNA(Asn) or Gln-tRNA(Gln) through the transamidation of misacylated Asp-tRNA(Asn) or Glu-tRNA(Gln) in organisms which lack either or both of asparaginyl-tRNA or glutaminyl-tRNA synthetases. The reaction takes place in the presence of glutamine and ATP through an activated phospho-Asp-tRNA(Asn) or phospho-Glu-tRNA(Gln). The polypeptide is Aspartyl/glutamyl-tRNA(Asn/Gln) amidotransferase subunit B (Methanosarcina acetivorans (strain ATCC 35395 / DSM 2834 / JCM 12185 / C2A)).